Consider the following 413-residue polypeptide: Serine/threonine transporter SstT (413 aa).

The next 8 membrane-spanning stretches (helical) occupy residues 19–39, 61–81, 89–109, 148–168, 189–209, 223–243, 297–317, and 325–345; these read IFIG…LQNV, AVAP…KKIG, IIVL…IAGF, ALFK…GLAL, IVYV…SETL, LLAV…PILV, IPLG…ILTL, and IQIS…CACG.

Belongs to the dicarboxylate/amino acid:cation symporter (DAACS) (TC 2.A.23) family.

The protein localises to the cell inner membrane. It catalyses the reaction L-serine(in) + Na(+)(in) = L-serine(out) + Na(+)(out). The enzyme catalyses L-threonine(in) + Na(+)(in) = L-threonine(out) + Na(+)(out). In terms of biological role, involved in the import of serine and threonine into the cell, with the concomitant import of sodium (symport system). This chain is Serine/threonine transporter SstT, found in Pasteurella multocida (strain Pm70).